The primary structure comprises 542 residues: Tubby-related protein 1 (542 aa).

Positions 1–289 (MPLRDETLRE…RAPSPPVEVD (289 aa)) are disordered. A compositionally biased stretch (basic and acidic residues) spans 91–104 (FLRDPEAKKRDPRE). The span at 114–132 (AEDEEEEEEEDEEDEEEEA) shows a compositional bias: acidic residues. The span at 146-157 (PLREKSSADLKE) shows a compositional bias: basic and acidic residues. Basic residues predominate over residues 262–275 (SNQKGKAKGKGKKK).

Belongs to the TUB family. As to quaternary structure, homodimer. May interact with ABCF1, PSIP1, ZEB1 and HMGB2 (Potential). Interacts with DNM1. Interacts with F-actin. Interacts with TUB. Interacts with TYRO3. In terms of tissue distribution, retina-specific.

The protein localises to the cytoplasm. The protein resides in the cell membrane. It is found in the secreted. Its subcellular location is the synapse. Functionally, required for normal development of photoreceptor synapses. Required for normal photoreceptor function and for long-term survival of photoreceptor cells. Interacts with cytoskeleton proteins and may play a role in protein transport in photoreceptor cells. Binds lipids, especially phosphatidylinositol 3-phosphate, phosphatidylinositol 4-phosphate, phosphatidylinositol 5-phosphate, phosphatidylinositol 3,4-bisphosphate, phosphatidylinositol 4,5-bisphosphate, phosphatidylinositol 3,4,5-bisphosphate, phosphatidylserine and phosphatidic acid (in vitro). Contribute to stimulation of phagocytosis of apoptotic retinal pigment epithelium (RPE) cells and macrophages. The protein is Tubby-related protein 1 (TULP1) of Homo sapiens (Human).